The primary structure comprises 424 residues: Dual-specificity RNA methyltransferase RlmN (424 aa).

Glu132 acts as the Proton acceptor in catalysis. Residues 138 to 388 (GPDRGTLCVS…VRTPRGRDIL (251 aa)) enclose the Radical SAM core domain. Cys145 and Cys391 are oxidised to a cystine. Positions 152, 156, and 159 each coordinate [4Fe-4S] cluster. S-adenosyl-L-methionine contacts are provided by residues 217 to 218 (GE), Ser249, 271 to 273 (SLH), and Asn348. The active-site S-methylcysteine intermediate is Cys391.

The protein belongs to the radical SAM superfamily. RlmN family. Requires [4Fe-4S] cluster as cofactor.

It localises to the cytoplasm. The enzyme catalyses adenosine(2503) in 23S rRNA + 2 reduced [2Fe-2S]-[ferredoxin] + 2 S-adenosyl-L-methionine = 2-methyladenosine(2503) in 23S rRNA + 5'-deoxyadenosine + L-methionine + 2 oxidized [2Fe-2S]-[ferredoxin] + S-adenosyl-L-homocysteine. The catalysed reaction is adenosine(37) in tRNA + 2 reduced [2Fe-2S]-[ferredoxin] + 2 S-adenosyl-L-methionine = 2-methyladenosine(37) in tRNA + 5'-deoxyadenosine + L-methionine + 2 oxidized [2Fe-2S]-[ferredoxin] + S-adenosyl-L-homocysteine. Specifically methylates position 2 of adenine 2503 in 23S rRNA and position 2 of adenine 37 in tRNAs. m2A2503 modification seems to play a crucial role in the proofreading step occurring at the peptidyl transferase center and thus would serve to optimize ribosomal fidelity. This is Dual-specificity RNA methyltransferase RlmN from Methylobacterium radiotolerans (strain ATCC 27329 / DSM 1819 / JCM 2831 / NBRC 15690 / NCIMB 10815 / 0-1).